Reading from the N-terminus, the 61-residue chain is Large ribosomal subunit protein bL32 (61 aa).

A compositionally biased stretch (basic residues) spans 1–18; the sequence is MAIVPKRKTSKQRKRKRQ. The disordered stretch occupies residues 1 to 20; the sequence is MAIVPKRKTSKQRKRKRQTH.

The protein belongs to the bacterial ribosomal protein bL32 family.

The polypeptide is Large ribosomal subunit protein bL32 (rpmF) (Mycoplasmopsis pulmonis (strain UAB CTIP) (Mycoplasma pulmonis)).